Consider the following 213-residue polypeptide: Ribosome maturation factor RimM (213 aa).

In terms of domain architecture, PRC barrel spans 99-175; that stretch reads DQDAAYISDL…RITMRLPEGL (77 aa). Positions 182-213 are disordered; it reads TATAREPRARRTRKRGLRKPITGADATPPDSQ. Residues 189 to 199 show a composition bias toward basic residues; the sequence is RARRTRKRGLR.

This sequence belongs to the RimM family. Binds ribosomal protein uS19.

The protein resides in the cytoplasm. Its function is as follows. An accessory protein needed during the final step in the assembly of 30S ribosomal subunit, possibly for assembly of the head region. Essential for efficient processing of 16S rRNA. May be needed both before and after RbfA during the maturation of 16S rRNA. It has affinity for free ribosomal 30S subunits but not for 70S ribosomes. This is Ribosome maturation factor RimM from Acidobacterium capsulatum (strain ATCC 51196 / DSM 11244 / BCRC 80197 / JCM 7670 / NBRC 15755 / NCIMB 13165 / 161).